Here is a 531-residue protein sequence, read N- to C-terminus: L-aspartate oxidase (531 aa).

FAD contacts are provided by residues Ser-11–Ala-14, Lys-33, Asn-40–Gly-47, Thr-151–Ala-152, and Asp-205. Catalysis depends on Arg-272, which acts as the Proton donor/acceptor. Residues Glu-353 and Ser-369–Leu-370 contribute to the FAD site.

The protein belongs to the FAD-dependent oxidoreductase 2 family. NadB subfamily. As to quaternary structure, monomer. Homodimer. Requires FAD as cofactor.

The protein resides in the cytoplasm. The catalysed reaction is L-aspartate + O2 = iminosuccinate + H2O2. It carries out the reaction fumarate + L-aspartate = iminosuccinate + succinate. It participates in cofactor biosynthesis; NAD(+) biosynthesis; iminoaspartate from L-aspartate (oxidase route): step 1/1. Its function is as follows. Catalyzes the oxidation of L-aspartate to iminoaspartate, the first step in the de novo biosynthesis of NAD(+). Can use either oxygen or fumarate as electron acceptors, which allows the enzyme to be functional under aerobic and anaerobic conditions. This chain is L-aspartate oxidase, found in Bacillus subtilis (strain 168).